The primary structure comprises 553 residues: Phospholipase B-like 1 (553 aa).

Positions 1–38 are cleaved as a signal peptide; that stretch reads MTRGGPGGRPGLPQPPPLLLLLLLLPLLLVTAEPPKPA. Asn71 carries N-linked (GlcNAc...) (high mannose) asparagine; alternate glycosylation. N-linked (GlcNAc...) (hybrid) asparagine; alternate glycosylation occurs at Asn71. Residues 209–227 constitute a propeptide, removed in mature form; sequence LSPTKNGSLKVFKRWDMGH. 2 N-linked (GlcNAc...) (high mannose) asparagine; alternate glycosylation sites follow: Asn308 and Asn366. Asn308 and Asn366 each carry an N-linked (GlcNAc...) (hybrid) asparagine; alternate glycan. Asn411 carries an N-linked (GlcNAc...) asparagine glycan. 2 cysteine pairs are disulfide-bonded: Cys470-Cys475 and Cys474-Cys489. Residue Asn526 is glycosylated (N-linked (GlcNAc...) (high mannose) asparagine; alternate). The N-linked (GlcNAc...) (hybrid) asparagine; alternate glycan is linked to Asn526.

Belongs to the phospholipase B-like family. In terms of assembly, may form a homodimer, each monomer is composed of a chain A and a chain B. In terms of processing, the maturation cleavages that produces chains A and B are required to open the putative substrate binding pocket. Both chains A and B remain associated in the mature protein. In terms of tissue distribution, expressed in neutrophils and monocytes.

Its subcellular location is the lysosome. Its function is as follows. In view of the small size of the putative binding pocket, it has been proposed that it may act as an amidase or a peptidase. Exhibits a weak phospholipase activity, acting on various phospholipids, including phosphatidylcholine, phosphatidylinositol, phosphatidylethanolamine and lysophospholipids. The polypeptide is Phospholipase B-like 1 (PLBD1) (Homo sapiens (Human)).